A 274-amino-acid polypeptide reads, in one-letter code: Diaminopimelate epimerase (274 aa).

The substrate site is built by asparagine 11, glutamine 44, and asparagine 64. The active-site Proton donor is the cysteine 73. Residues glycine 74 to asparagine 75, asparagine 157, asparagine 190, and glutamate 208 to arginine 209 each bind substrate. Residue cysteine 217 is the Proton acceptor of the active site. Glycine 218–serine 219 contributes to the substrate binding site.

It belongs to the diaminopimelate epimerase family. As to quaternary structure, homodimer.

Its subcellular location is the cytoplasm. It catalyses the reaction (2S,6S)-2,6-diaminopimelate = meso-2,6-diaminopimelate. It functions in the pathway amino-acid biosynthesis; L-lysine biosynthesis via DAP pathway; DL-2,6-diaminopimelate from LL-2,6-diaminopimelate: step 1/1. Catalyzes the stereoinversion of LL-2,6-diaminopimelate (L,L-DAP) to meso-diaminopimelate (meso-DAP), a precursor of L-lysine and an essential component of the bacterial peptidoglycan. The protein is Diaminopimelate epimerase of Proteus mirabilis (strain HI4320).